Here is an 885-residue protein sequence, read N- to C-terminus: Alanine--tRNA ligase (885 aa).

Residues histidine 564, histidine 568, cysteine 676, and histidine 680 each contribute to the Zn(2+) site.

The protein belongs to the class-II aminoacyl-tRNA synthetase family. It depends on Zn(2+) as a cofactor.

The protein localises to the cytoplasm. It carries out the reaction tRNA(Ala) + L-alanine + ATP = L-alanyl-tRNA(Ala) + AMP + diphosphate. Its function is as follows. Catalyzes the attachment of alanine to tRNA(Ala) in a two-step reaction: alanine is first activated by ATP to form Ala-AMP and then transferred to the acceptor end of tRNA(Ala). Also edits incorrectly charged Ser-tRNA(Ala) and Gly-tRNA(Ala) via its editing domain. In Brucella anthropi (strain ATCC 49188 / DSM 6882 / CCUG 24695 / JCM 21032 / LMG 3331 / NBRC 15819 / NCTC 12168 / Alc 37) (Ochrobactrum anthropi), this protein is Alanine--tRNA ligase.